The following is a 305-amino-acid chain: tRNA dimethylallyltransferase (305 aa).

11–18 contacts ATP; it reads GPTAVGKT. Residue 13–18 participates in substrate binding; it reads TAVGKT. The tract at residues 36–39 is interaction with substrate tRNA; the sequence is DSMQ.

Belongs to the IPP transferase family. Monomer. It depends on Mg(2+) as a cofactor.

The catalysed reaction is adenosine(37) in tRNA + dimethylallyl diphosphate = N(6)-dimethylallyladenosine(37) in tRNA + diphosphate. Its function is as follows. Catalyzes the transfer of a dimethylallyl group onto the adenine at position 37 in tRNAs that read codons beginning with uridine, leading to the formation of N6-(dimethylallyl)adenosine (i(6)A). This chain is tRNA dimethylallyltransferase, found in Listeria innocua serovar 6a (strain ATCC BAA-680 / CLIP 11262).